A 256-amino-acid polypeptide reads, in one-letter code: Probable septum site-determining protein MinC (256 aa).

Residues 105–143 (RRGATAKPEPADEAEPPVAAAAAEAVPEPAPELAPSAPT) form a disordered region. Over residues 120-142 (PPVAAAAAEAVPEPAPELAPSAP) the composition is skewed to low complexity.

The protein belongs to the MinC family. Interacts with MinD and FtsZ.

Its function is as follows. Cell division inhibitor that blocks the formation of polar Z ring septums. Rapidly oscillates between the poles of the cell to destabilize FtsZ filaments that have formed before they mature into polar Z rings. Prevents FtsZ polymerization. This chain is Probable septum site-determining protein MinC, found in Burkholderia vietnamiensis (strain G4 / LMG 22486) (Burkholderia cepacia (strain R1808)).